A 665-amino-acid chain; its full sequence is Zinc finger CCCH domain-containing protein 45 (665 aa).

The disordered stretch occupies residues 1–55 (MDDGDLSFDFEGGLDQPPAGGGGGPAPHSSDPGGVGGGGGGGGPGDGGGHGRGRG). Over residues 33-50 (GGVGGGGGGGGPGDGGGH) the composition is skewed to gly residues. 3 consecutive C3H1-type zinc fingers follow at residues 58 to 85 (SYRQTVCRHWLRGLCMKGEACGFLHQFD), 86 to 113 (KARMPVCRFFRDFGECREPDCAYKHSYD), and 114 to 139 (DVKECNMYKMGFCPNGPNCRYKHVKL). Residues 167–256 (HNNYNQQGER…QATRIATPLP (90 aa)) form a disordered region. Over residues 169–200 (NYNQQGERPQHPQGSGLPNQNSIDNTTTTTAQ) the composition is skewed to polar residues. The segment covering 205–238 (QQAQTTNQQPPQQQQQQQQQQQQQQKPNTNDQVQ) has biased composition (low complexity). The span at 239–250 (SVPNGSSNQATR) shows a compositional bias: polar residues. The 136-residue stretch at 260–395 (SRYFIVKSCN…FIGEQLASLL (136 aa)) folds into the YTH domain. Positions 432 to 459 (DIVLFDDNEEEEEEESEEEEEGNGQESQ) form a coiled coil. A compositionally biased stretch (acidic residues) spans 439–454 (NEEEEEEESEEEEEGN). 2 disordered regions span residues 439–469 (NEEEEEEESEEEEEGNGQESQGRGRGRGMMW) and 561–665 (GPLM…SRKR). Positions 561–573 (GPLMGGLGMGGPG) are enriched in gly residues. Residues 596–623 (TKREQRRPGGERGDRYETTSDQGSRGHD) show a composition bias toward basic and acidic residues.

In Oryza sativa subsp. japonica (Rice), this protein is Zinc finger CCCH domain-containing protein 45.